The primary structure comprises 158 residues: NAD(P)H-quinone oxidoreductase subunit N (158 aa).

Belongs to the complex I NdhN subunit family. In terms of assembly, NDH-1 can be composed of about 15 different subunits; different subcomplexes with different compositions have been identified which probably have different functions.

It is found in the cellular thylakoid membrane. The enzyme catalyses a plastoquinone + NADH + (n+1) H(+)(in) = a plastoquinol + NAD(+) + n H(+)(out). It carries out the reaction a plastoquinone + NADPH + (n+1) H(+)(in) = a plastoquinol + NADP(+) + n H(+)(out). Functionally, NDH-1 shuttles electrons from an unknown electron donor, via FMN and iron-sulfur (Fe-S) centers, to quinones in the respiratory and/or the photosynthetic chain. The immediate electron acceptor for the enzyme in this species is believed to be plastoquinone. Couples the redox reaction to proton translocation, and thus conserves the redox energy in a proton gradient. Cyanobacterial NDH-1 also plays a role in inorganic carbon-concentration. The polypeptide is NAD(P)H-quinone oxidoreductase subunit N (Crocosphaera subtropica (strain ATCC 51142 / BH68) (Cyanothece sp. (strain ATCC 51142))).